Reading from the N-terminus, the 283-residue chain is Elongation factor Ts (283 aa).

The tract at residues 80-83 (TDFV) is involved in Mg(2+) ion dislocation from EF-Tu.

This sequence belongs to the EF-Ts family.

It is found in the cytoplasm. Associates with the EF-Tu.GDP complex and induces the exchange of GDP to GTP. It remains bound to the aminoacyl-tRNA.EF-Tu.GTP complex up to the GTP hydrolysis stage on the ribosome. The protein is Elongation factor Ts of Actinobacillus succinogenes (strain ATCC 55618 / DSM 22257 / CCUG 43843 / 130Z).